We begin with the raw amino-acid sequence, 170 residues long: Large ribosomal subunit protein bL9 (170 aa).

A disordered region spans residues 149-170 (DGDNEDLDEDNAADENEDYSEE).

This sequence belongs to the bacterial ribosomal protein bL9 family.

Binds to the 23S rRNA. The polypeptide is Large ribosomal subunit protein bL9 (Psychrobacter cryohalolentis (strain ATCC BAA-1226 / DSM 17306 / VKM B-2378 / K5)).